Consider the following 892-residue polypeptide: Alanine--tRNA ligase (892 aa).

Zn(2+) is bound by residues H574, H578, C677, and H681.

It belongs to the class-II aminoacyl-tRNA synthetase family. The cofactor is Zn(2+).

It localises to the cytoplasm. It carries out the reaction tRNA(Ala) + L-alanine + ATP = L-alanyl-tRNA(Ala) + AMP + diphosphate. In terms of biological role, catalyzes the attachment of alanine to tRNA(Ala) in a two-step reaction: alanine is first activated by ATP to form Ala-AMP and then transferred to the acceptor end of tRNA(Ala). Also edits incorrectly charged Ser-tRNA(Ala) and Gly-tRNA(Ala) via its editing domain. The chain is Alanine--tRNA ligase from Mesoplasma florum (strain ATCC 33453 / NBRC 100688 / NCTC 11704 / L1) (Acholeplasma florum).